A 235-amino-acid chain; its full sequence is Modulator of macroautophagy TMEM150B (235 aa).

Over methionine 1 to leucine 8 the chain is Cytoplasmic. A helical transmembrane segment spans residues proline 9–valine 29. The Extracellular portion of the chain corresponds to asparagine 30–glutamine 51. A glycan (N-linked (GlcNAc...) asparagine) is linked at asparagine 34. Residues serine 52 to leucine 72 traverse the membrane as a helical segment. The Cytoplasmic portion of the chain corresponds to arginine 73–glutamine 88. The chain crosses the membrane as a helical span at residues valine 89–glutamate 109. Topologically, residues lysine 110–histidine 116 are extracellular. Residues leucine 117–leucine 137 form a helical membrane-spanning segment. At serine 138–arginine 156 the chain is on the cytoplasmic side. Residues leucine 157–serine 177 traverse the membrane as a helical segment. Residues methionine 178–serine 180 are Extracellular-facing. A helical transmembrane segment spans residues valine 181 to alanine 201. At valine 202–leucine 235 the chain is on the cytoplasmic side.

Belongs to the DRAM/TMEM150 family.

It is found in the cell membrane. It localises to the endosome membrane. Its subcellular location is the cytoplasmic vesicle. The protein localises to the autophagosome membrane. Functionally, modulator of macroautophagy that causes accumulation of autophagosomes under basal conditions and enhances autophagic flux. Represses cell death and promotes long-term clonogenic survival of cells grown in the absence of glucose in a macroautophagy-independent manner. May have some role in extracellular matrix engulfment or growth factor receptor recycling, both of which can modulate cell survival. The chain is Modulator of macroautophagy TMEM150B from Bos taurus (Bovine).